The following is a 466-amino-acid chain: Peptidyl-prolyl cis-trans isomerase CYP37, chloroplastic (466 aa).

The N-terminal 65 residues, 1-65, are a transit peptide targeting the chloroplast; that stretch reads MASPLSSSTV…GTKELIHSCN (65 aa). The transit peptide at 66-114 directs the protein to the thylakoid; sequence SSIDSKLNTFEAGSKNLEKLVATILIFVQVWSPLPLFGLDSAYISPAEA. The PPIase cyclophilin-type domain occupies 278 to 466; that stretch reads TFSAEAGGDQ…VQNNNINEST (189 aa).

Aerial parts.

It is found in the plastid. The protein localises to the chloroplast thylakoid lumen. The enzyme catalyses [protein]-peptidylproline (omega=180) = [protein]-peptidylproline (omega=0). In terms of biological role, PPIases accelerate the folding of proteins. It catalyzes the cis-trans isomerization of proline imidic peptide bonds in oligopeptides. This is Peptidyl-prolyl cis-trans isomerase CYP37, chloroplastic (CYP37) from Arabidopsis thaliana (Mouse-ear cress).